The primary structure comprises 169 residues: Positive control factor (169 aa).

The segment at residues 132 to 157 (YERIADLLGVKKSTVQTTIKRASLKM) is a DNA-binding region (H-T-H motif).

Its function is as follows. Positive regulatory protein that acts at the late promoter PL. This is Positive control factor (xpf) from Bacillus subtilis (strain 168).